The sequence spans 443 residues: 23S rRNA (uracil(1939)-C(5))-methyltransferase RlmD (443 aa).

Positions 4-66 (QNRFDRTSFQ…RHFDEARVVE (63 aa)) constitute a TRAM domain. [4Fe-4S] cluster is bound by residues cysteine 79, cysteine 85, cysteine 88, and cysteine 167. Residues glutamine 275, phenylalanine 304, asparagine 309, glutamate 325, aspartate 352, and aspartate 373 each coordinate S-adenosyl-L-methionine. Cysteine 399 (nucleophile) is an active-site residue.

Belongs to the class I-like SAM-binding methyltransferase superfamily. RNA M5U methyltransferase family. RlmD subfamily.

The catalysed reaction is uridine(1939) in 23S rRNA + S-adenosyl-L-methionine = 5-methyluridine(1939) in 23S rRNA + S-adenosyl-L-homocysteine + H(+). Functionally, catalyzes the formation of 5-methyl-uridine at position 1939 (m5U1939) in 23S rRNA. The sequence is that of 23S rRNA (uracil(1939)-C(5))-methyltransferase RlmD from Xylella fastidiosa (strain 9a5c).